The chain runs to 756 residues: Neutral ceramidase (756 aa).

The Cytoplasmic segment spans residues 1-11 (MAKRTFSTLEA). A helical; Signal-anchor for type II membrane protein transmembrane segment spans residues 12-32 (FLIFLLVIMTVITVALLTLLF). The Lumenal segment spans residues 33–756 (VTSGTIENHK…ISSPFEVVTT (724 aa)). O-linked (GalNAc...) threonine glycans are attached at residues Thr56, Thr57, Thr58, and Thr64. Leu110 contacts Ca(2+). Residue His170 participates in Zn(2+) binding. The N-linked (GlcNAc...) asparagine glycan is linked to Asn193. His279 contributes to the Zn(2+) binding site. Ser330 (nucleophile) is an active-site residue. 2 disulfides stabilise this stretch: Cys338-Cys352 and Cys345-Cys360. 2 N-linked (GlcNAc...) asparagine glycosylation sites follow: Asn407 and Asn444. Residues Cys424 and Cys474 are joined by a disulfide bond. Residues Glu516 and Tyr555 each contribute to the Zn(2+) site. Residues Asp688, Ser690, and Thr693 each coordinate Ca(2+). Residues 746-756 (GISSPFEVVTT) form a required for correct folding and localization region.

It belongs to the neutral ceramidase family. In terms of assembly, may interact with CAV1. The cofactor is Zn(2+). In terms of processing, proteolytic cleavage of the N-terminus removes the signal-anchor and produces a soluble form of the protein. Post-translationally, N-glycosylated. Required for enzyme activity. O-glycosylated. Required to retain it as a type II membrane protein at the cell surface. In terms of processing, phosphorylated. May prevent ubiquitination and subsequent degradation. Post-translationally, ubiquitinated, leading to its degradation by the proteasome. Ubiquitination is triggered by nitric oxide. As to expression, widely expressed. Strongly expressed in small intestine and to a lower extent in liver and kidney. Highly expressed in duodenum, jejunum and ileum along the brush border of the small intestine (at protein level).

The protein resides in the cell membrane. It is found in the membrane raft. Its subcellular location is the membrane. The protein localises to the caveola. It localises to the golgi apparatus membrane. The protein resides in the mitochondrion. It is found in the secreted. Its subcellular location is the extracellular exosome. The enzyme catalyses an N-acylsphing-4-enine + H2O = sphing-4-enine + a fatty acid. It carries out the reaction N-hexadecanoylsphing-4-enine + H2O = sphing-4-enine + hexadecanoate. The catalysed reaction is N-dodecanoylsphing-4-enine + H2O = dodecanoate + sphing-4-enine. It catalyses the reaction N-octadecanoylsphing-4-enine + H2O = sphing-4-enine + octadecanoate. The enzyme catalyses N-octanoylsphing-4-enine + H2O = octanoate + sphing-4-enine. It carries out the reaction N-(hexanoyl)sphing-4-enine + H2O = hexanoate + sphing-4-enine. The catalysed reaction is N-tetradecanoylsphing-4-enine + H2O = tetradecanoate + sphing-4-enine. It catalyses the reaction N-(9Z-octadecenoyl)-sphing-4-enine + H2O = sphing-4-enine + (9Z)-octadecenoate. The enzyme catalyses N-(15Z-tetracosenoyl)-sphing-4-enine + H2O = (15Z)-tetracosenoate + sphing-4-enine. It carries out the reaction sphinganine + hexadecanoate = N-hexadecanoylsphinganine + H2O. The catalysed reaction is N-(octadecanoyl)-sphinganine + H2O = sphinganine + octadecanoate. The protein operates within lipid metabolism; sphingolipid metabolism. With respect to regulation, inhibited by D-erythro-MAPP. Functionally, plasma membrane ceramidase that hydrolyzes sphingolipid ceramides into sphingosine and free fatty acids at neutral pH. Ceramides, sphingosine, and its phosphorylated form sphingosine-1-phosphate are bioactive lipids that mediate cellular signaling pathways regulating several biological processes including cell proliferation, apoptosis and differentiation. Also catalyzes the reverse reaction allowing the synthesis of ceramides from fatty acids and sphingosine. Together with sphingomyelinase, participates in the production of sphingosine and sphingosine-1-phosphate from the degradation of sphingomyelin, a sphingolipid enriched in the plasma membrane of cells. Also participates in the hydrolysis of ceramides from the extracellular milieu allowing the production of sphingosine-1-phosphate inside and outside cells. This is the case for instance with the digestion of dietary sphingolipids in the intestinal tract. In Mus musculus (Mouse), this protein is Neutral ceramidase (Asah2).